Reading from the N-terminus, the 954-residue chain is Zinc finger protein 618 (954 aa).

Residue Met-1 is modified to N-acetylmethionine. Positions 1-19 (MNQPGGAAAPQADGASAAG) are enriched in low complexity. Positions 1–56 (MNQPGGAAAPQADGASAAGRKSTASRERLKRSQKSTKVEGPEPVPAEASLSAEQGT) are disordered. Glycyl lysine isopeptide (Lys-Gly) (interchain with G-Cter in SUMO2) cross-links involve residues Lys-63 and Lys-81. 2 C2H2-type zinc fingers span residues 147–169 (YECG…VRAH) and 188–210 (YTCD…RDLH). Lys-239 participates in a covalent cross-link: Glycyl lysine isopeptide (Lys-Gly) (interchain with G-Cter in SUMO2). Residues 256-278 (YTCEFCGKQYKYYTPYQEHVALH) form a C2H2-type 3 zinc finger. Disordered regions lie at residues 282–307 (STAP…VSPS) and 337–390 (RTPP…NSSE). Positions 340–357 (PATQTQTFRTPNSGSPAS) are enriched in polar residues. The segment covering 366-380 (FSRRVEGKAQNHFEE) has biased composition (basic and acidic residues). The C2H2-type 4 zinc-finger motif lies at 392-414 (YTCGACGIQFQFYNNLLEHMQSH). The interval 421 to 463 (NIASNQSRSPPAVVEEKWKPQAQRNSANNTTTSGLTPNSMIPE) is disordered. Residue Lys-437 forms a Glycyl lysine isopeptide (Lys-Gly) (interchain with G-Cter in SUMO2) linkage. Residues 442–459 (AQRNSANNTTTSGLTPNS) are compositionally biased toward polar residues.

The protein belongs to the krueppel C2H2-type zinc-finger protein family. In terms of assembly, interacts with UHRF2.

The protein resides in the nucleus. The protein localises to the chromosome. Functionally, regulates UHRF2 function as a specific 5-hydroxymethylcytosine (5hmC) reader by regulating its chromatin localization. This chain is Zinc finger protein 618 (ZNF618), found in Homo sapiens (Human).